We begin with the raw amino-acid sequence, 805 residues long: Arginine/serine-rich protein PNISR (805 aa).

The span at 75-88 shows a compositional bias: polar residues; that stretch reads NNHGNFQGDSNFNR. Disordered stretches follow at residues 75–331 and 382–805; these read NNHG…EEKE and LTGL…SRSR. Composition is skewed to pro residues over residues 100–115 and 183–194; these read PPHP…PAPG and YWQPGPPGPPAP. Basic and acidic residues predominate over residues 197 to 210; that stretch reads NRRERPPSFRDRQR. Phosphoserine is present on residues S204 and S211. A Glycyl lysine isopeptide (Lys-Gly) (interchain with G-Cter in SUMO2) cross-link involves residue K218. Positions 237 to 276 form a coiled coil; it reads REGLEKMEREKQKKLEKERMEQQRSQLSKKEKKATEDAEG. Residues 238 to 258 show a composition bias toward basic and acidic residues; the sequence is EGLEKMEREKQKKLEKERMEQ. Residues S290, S304, S313, and S321 each carry the phosphoserine modification. Residues 290–299 are compositionally biased toward acidic residues; that stretch reads SDEEDEDAEN. Residues 384 to 393 are compositionally biased toward gly residues; it reads GLGGLGGYGS. Over residues 421-463 the composition is skewed to basic and acidic residues; the sequence is QKQEAFWRKEKEQQLLQDKQIEEEKQQTERVTKEMNEFIHREQ. The stretch at 427-461 forms a coiled coil; sequence WRKEKEQQLLQDKQIEEEKQQTERVTKEMNEFIHR. Phosphoserine occurs at positions 465 and 467. 2 stretches are compositionally biased toward basic and acidic residues: residues 473–486 and 494–508; these read EADR…KRTP and EPKR…ERGS. T485 bears the Phosphothreonine mark. K496 is covalently cross-linked (Glycyl lysine isopeptide (Lys-Gly) (interchain with G-Cter in SUMO2)). Low complexity predominate over residues 509-550; it reads RSGSSSSGSSSSGSRTSSSSSSVSSSSYSSSSGSSCTSSRSS. 4 stretches are compositionally biased toward basic residues: residues 551-560, 567-579, 587-598, and 607-639; these read SPKRRKRPSR, KARR…YSRR, TRGKLRDRRRSN, and RRNR…SRDR. Basic and acidic residues predominate over residues 659–721; it reads EAKEQDRKKE…KRKRESERTF (63 aa). K703 participates in a covalent cross-link: Glycyl lysine isopeptide (Lys-Gly) (interchain with G-Cter in SUMO2). S726 bears the Phosphoserine mark. The segment covering 732–753 has biased composition (basic and acidic residues); the sequence is IRHDSRQDSKKNATKDSKRHSG. A compositionally biased stretch (low complexity) spans 754–767; sequence SDSSGRSSSESPGS. 2 stretches are compositionally biased toward basic residues: residues 771 to 781 and 789 to 805; these read KKAKKPKHSRS and RSGK…SRSR.

The protein belongs to the splicing factor SR family. As to quaternary structure, interacts with PNN.

It is found in the nucleus speckle. This is Arginine/serine-rich protein PNISR (Pnisr) from Mus musculus (Mouse).